Consider the following 317-residue polypeptide: L-lactate dehydrogenase (317 aa).

NAD(+) contacts are provided by residues valine 17, aspartate 38, lysine 43, tyrosine 69, and 83–84; that span reads GA. Substrate is bound by residues glutamine 86 and arginine 92. Residues serine 105, 122–124, and serine 147 each bind NAD(+); that span reads ATN. Residue 124-127 participates in substrate binding; sequence NPVD. 152 to 155 contacts substrate; sequence DTAR. Beta-D-fructose 1,6-bisphosphate is bound by residues arginine 157 and histidine 172. Residue histidine 179 is the Proton acceptor of the active site. Tyrosine 224 carries the phosphotyrosine modification. Threonine 233 is a substrate binding site.

It belongs to the LDH/MDH superfamily. LDH family. Homotetramer.

Its subcellular location is the cytoplasm. It catalyses the reaction (S)-lactate + NAD(+) = pyruvate + NADH + H(+). Its pathway is fermentation; pyruvate fermentation to lactate; (S)-lactate from pyruvate: step 1/1. With respect to regulation, allosterically activated by fructose 1,6-bisphosphate (FBP). Catalyzes the conversion of lactate to pyruvate. The sequence is that of L-lactate dehydrogenase from Bacillus caldotenax.